Reading from the N-terminus, the 315-residue chain is Methionyl-tRNA formyltransferase (315 aa).

113–116 (SILP) lines the (6S)-5,6,7,8-tetrahydrofolate pocket.

Belongs to the Fmt family.

The catalysed reaction is L-methionyl-tRNA(fMet) + (6R)-10-formyltetrahydrofolate = N-formyl-L-methionyl-tRNA(fMet) + (6S)-5,6,7,8-tetrahydrofolate + H(+). Functionally, attaches a formyl group to the free amino group of methionyl-tRNA(fMet). The formyl group appears to play a dual role in the initiator identity of N-formylmethionyl-tRNA by promoting its recognition by IF2 and preventing the misappropriation of this tRNA by the elongation apparatus. This is Methionyl-tRNA formyltransferase from Vibrio parahaemolyticus serotype O3:K6 (strain RIMD 2210633).